A 65-amino-acid chain; its full sequence is Small ribosomal subunit protein bS21B (65 aa).

This sequence belongs to the bacterial ribosomal protein bS21 family.

The sequence is that of Small ribosomal subunit protein bS21B from Geobacter sulfurreducens (strain ATCC 51573 / DSM 12127 / PCA).